A 227-amino-acid chain; its full sequence is Trypsin (227 aa).

Residues 1–223 (IVGGEDANVQ…YYDVLMEQIN (223 aa)) form the Peptidase S1 domain. A disulfide bond links cysteine 27 and cysteine 43. Catalysis depends on charge relay system residues histidine 42 and aspartate 88. Intrachain disulfides connect cysteine 150/cysteine 164 and cysteine 175/cysteine 199. Serine 179 acts as the Charge relay system in catalysis.

The protein belongs to the peptidase S1 family.

It carries out the reaction Preferential cleavage: Arg-|-Xaa, Lys-|-Xaa.. The protein is Trypsin of Saccharopolyspora erythraea (Streptomyces erythraeus).